A 155-amino-acid polypeptide reads, in one-letter code: Nodulin-related protein 2 (155 aa).

Methionine 1 is modified (N-acetylmethionine). 2 disordered regions span residues 1-37 (MNFISDQVKKLSSSTPEEPDHNKPVEGTETATRPATN) and 85-155 (DEKS…GFLK). The segment covering 95–106 (DKAEKYLNDYES) has biased composition (basic and acidic residues). The span at 120 to 130 (SQAEPASQPEP) shows a compositional bias: low complexity.

In terms of assembly, interacts with DEK3.

Its function is as follows. May be a negative regulator of the ABA signaling/synthesis pathway. This is Nodulin-related protein 2 from Arabidopsis thaliana (Mouse-ear cress).